A 328-amino-acid chain; its full sequence is tRNA N6-adenosine threonylcarbamoyltransferase (328 aa).

The Fe cation site is built by His-111 and His-115. Substrate is bound by residues 133–137 (LVSGG), Asp-166, Gly-179, Asp-183, and Asn-270. Asp-296 is a Fe cation binding site.

The protein belongs to the KAE1 / TsaD family. The cofactor is Fe(2+).

It is found in the cytoplasm. The catalysed reaction is L-threonylcarbamoyladenylate + adenosine(37) in tRNA = N(6)-L-threonylcarbamoyladenosine(37) in tRNA + AMP + H(+). In terms of biological role, required for the formation of a threonylcarbamoyl group on adenosine at position 37 (t(6)A37) in tRNAs that read codons beginning with adenine. Is involved in the transfer of the threonylcarbamoyl moiety of threonylcarbamoyl-AMP (TC-AMP) to the N6 group of A37, together with TsaE and TsaB. TsaD likely plays a direct catalytic role in this reaction. The sequence is that of tRNA N6-adenosine threonylcarbamoyltransferase from Phytoplasma australiense.